A 589-amino-acid polypeptide reads, in one-letter code: MAAADGDDSLYPIAVLIDELRNEDVQLRLNSIKKLSTIALALGVERTRSELLPFLTDTIYDEDEVLLALAEQLGTFTTLVGGPEYVHCLLPPLESLATVEETVVRDKAVESLRAISHEHSPSDLEAHFVPLVKRLAGGDWFTSRTSACGLFSVCYPRVSSAVKAELRQYFRNLCSDDTPMVRRAAASKLGEFAKVLELDNVKSEIIPMFSNLASDEQDSVRLLAVEACVNIAQLLPQEDLEALVMPTLRQAAEDKSWRVRYMVADKFTELQKAVGPEITKTDLVPAFQNLMKDCEAEVRAAASHKVKEFCENLSADCRENVIMTQILPCIKELVSDANQHVKSALASVIMGLSPILGKDNTIEHLLPLFLAQLKDECPEVRLNIISNLDCVNEVIGIRQLSQSLLPAIVELAEDAKWRVRLAIIEYMPLLAGQLGVEFFDEKLNSLCMAWLVDHVYAIREAATSNLKKLVEKFGKEWAHATIIPKVLAMSGDPNYLHRMTTLFCINVLSEVCGQDITTKHMLPTVLRMAGDPVANVRFNVAKSLQKIGPILDNSTLQSEVKPILEKLTQDQDVDVKYFAQEALTVLSLA.

Ala-2 bears the N-acetylalanine mark. HEAT repeat units lie at residues 8-46, 47-84, 85-123, 124-161, 162-200, 201-239, 240-278, 279-321, 322-360, 361-399, 400-438, 439-477, 478-516, 517-555, and 556-589; these read DSLYPIAVLIDELRNEDVQLRLNSIKKLSTIALALGVER, TRSELLPFLTDTIYDEDEVLLALAEQLGTFTTLVGGPE, YVHCLLPPLESLATVEETVVRDKAVESLRAISHEHSPSD, LEAHFVPLVKRLAGGDWFTSRTSACGLFSVCYPRVSSA, VKAELRQYFRNLCSDDTPMVRRAAASKLGEFAKVLELDN, VKSEIIPMFSNLASDEQDSVRLLAVEACVNIAQLLPQED, LEALVMPTLRQAAEDKSWRVRYMVADKFTELQKAVGPEI, TKTD…RENV, IMTQILPCIKELVSDANQHVKSALASVIMGLSPILGKDN, TIEHLLPLFLAQLKDECPEVRLNIISNLDCVNEVIGIRQ, LSQSLLPAIVELAEDAKWRVRLAIIEYMPLLAGQLGVEF, FDEKLNSLCMAWLVDHVYAIREAATSNLKKLVEKFGKEW, AHATIIPKVLAMSGDPNYLHRMTTLFCINVLSEVCGQDI, TTKHMLPTVLRMAGDPVANVRFNVAKSLQKIGPILDNST, and LQSEVKPILEKLTQDQDVDVKYFAQEALTVLSLA. At Lys-280 the chain carries N6-acetyllysine.

It belongs to the phosphatase 2A regulatory subunit A family. PP2A consists of a common heterodimeric core enzyme, composed of PPP2CA a 36 kDa catalytic subunit (subunit C) and PPP2R1A a 65 kDa constant regulatory subunit (PR65 or subunit A), that associates with a variety of regulatory subunits. Proteins that associate with the core dimer include three families of regulatory subunits B (the R2/B/PR55/B55, R3/B''/PR72/PR130/PR59 and R5/B'/B56 families), the 48 kDa variable regulatory subunit, viral proteins, and cell signaling molecules. Found in a complex with at least ARL2, PPP2CB, PPP2R1A, PPP2R2A, PPP2R5E and TBCD. Interacts with the PP2A C catalytic subunit PPP2CA. Interacts with the PP2A B subunit PPP2R2A. Interacts with the PP2A B subunit PPP2R5D. Interacts with FOXO1; the interaction dephosphorylates FOXO1 on AKT-mediated phosphorylation sites. Interacts with IPO9. Interacts with TP53 and SGO1. Interacts with PLA2G16; this interaction might decrease PP2A activity. Interacts with CTTNBP2NL. Interacts with GNA12; the interaction promotes protein phosphatase 2A activation causing dephosphorylation of MAPT. Interacts with CIP2A; this interaction stabilizes CIP2A. Interacts with PABIR1/FAM122A. Interacts with ADCY8; antagonizes interaction between ADCY8 and calmodulin. Interacts with CRTC3 (when phosphorylated at 'Ser-391'). Interacts with SPRY2. Part of the core of STRIPAK complexes composed of PP2A catalytic and scaffolding subunits, the striatins (PP2A regulatory subunits), the striatin-associated proteins MOB4, STRIP1 and STRIP2, PDCD10 and members of the STE20 kinases, such as STK24 and STK26. Component of the Integrator-PP2A (INTAC) complex, composed of the Integrator core complex and protein phosphatase 2A subunits PPP2CA and PPP2R1A.

It localises to the cytoplasm. The protein localises to the nucleus. Its subcellular location is the chromosome. The protein resides in the centromere. It is found in the lateral cell membrane. It localises to the cell projection. The protein localises to the dendrite. In terms of biological role, the PR65 subunit of protein phosphatase 2A serves as a scaffolding molecule to coordinate the assembly of the catalytic subunit and a variable regulatory B subunit. Upon interaction with GNA12 promotes dephosphorylation of microtubule associated protein TAU/MAPT. Required for proper chromosome segregation and for centromeric localization of SGO1 in mitosis. Together with RACK1 adapter, mediates dephosphorylation of AKT1 at 'Ser-473', preventing AKT1 activation and AKT-mTOR signaling pathway. Dephosphorylation of AKT1 is essential for regulatory T-cells (Treg) homeostasis and stability. Part of the striatin-interacting phosphatase and kinase (STRIPAK) complexes. STRIPAK complexes have critical roles in protein (de)phosphorylation and are regulators of multiple signaling pathways including Hippo, MAPK, nuclear receptor and cytoskeleton remodeling. Different types of STRIPAK complexes are involved in a variety of biological processes such as cell growth, differentiation, apoptosis, metabolism and immune regulation. Key mediator of a quality checkpoint during transcription elongation as part of the Integrator-PP2A (INTAC) complex. The INTAC complex drives premature transcription termination of transcripts that are unfavorably configured for transcriptional elongation: within the INTAC complex, acts as a scaffolding subunit for PPP2CA, which catalyzes dephosphorylation of the C-terminal domain (CTD) of Pol II subunit POLR2A/RPB1 and SUPT5H/SPT5, thereby preventing transcriptional elongation. Regulates the recruitment of the SKA complex to kinetochores. The protein is Serine/threonine-protein phosphatase 2A 65 kDa regulatory subunit A alpha isoform (Ppp2r1a) of Mus musculus (Mouse).